A 462-amino-acid polypeptide reads, in one-letter code: Tryptophan dimethylallyltransferase ifgA (462 aa).

L-tryptophan contacts are provided by residues 83–84 (IL) and glutamate 92. Residues arginine 103, lysine 189, and tyrosine 191 each contribute to the substrate site. Residues tyrosine 193 and arginine 246 each coordinate L-tryptophan. Residues arginine 259, lysine 261, tyrosine 263, glutamine 345, and tyrosine 347 each contribute to the substrate site.

It belongs to the tryptophan dimethylallyltransferase family. Homodimer.

It carries out the reaction L-tryptophan + dimethylallyl diphosphate = 4-(3-methylbut-2-enyl)-L-tryptophan + diphosphate. The protein operates within alkaloid biosynthesis; ergot alkaloid biosynthesis. Functionally, tryptophan dimethylallyltransferase; part of the gene cluster that mediates the biosynthesis of isofumigaclavines, fungal ergot alkaloids. The tryptophan dimethylallyltransferase ifgA catalyzes the first step of ergot alkaloid biosynthesis by condensing dimethylallyl diphosphate (DMAP) and tryptophan to form 4-dimethylallyl-L-tryptophan. The second step is catalyzed by the methyltransferase ifgB that methylates 4-dimethylallyl-L-tryptophan in the presence of S-adenosyl-L-methionine, resulting in the formation of N-methyl-dimethylallyl-L-tryptophan. The catalase ifgD and the FAD-dependent oxidoreductase ifgC then transform N-methyl-dimethylallyl-L-tryptophan to chanoclavine-I which is further oxidized by ifgE in the presence of NAD(+), resulting in the formation of chanoclavine-I aldehyde. The chanoclavine-I aldehyde reductases ifgG and/or fgaOx3 reduce chanoclavine-I aldehyde to dihydrochanoclavine-I aldehyde that spontaneously dehydrates to form 6,8-dimethyl-6,7-didehydroergoline. The festuclavine dehydrogenases ifgF1 and/or ifgF2 then catalyze the reduction of 6,8-dimethyl-6,7-didehydroergoline to form festuclavine. Hydrolysis of festuclavine by a yet undetermined cytochrome P450 monooxygenase (called ifgH) then leads to the formation of isofumigaclavine B which is in turn acetylated by ifgI to isofumigaclavine A. Penicillium roqueforti has interestingly at least two sets of genes for the consumption of chanoclavine-I aldehyde on three different loci, the OYEs ifgG/fgaOx3 and the festuclavine synthase homologs ifgF1/ifgF2. The reason for the duplication of these genes is unclear, probably to ensure the conversion of chanoclavine-I aldehyde by differential gene expression under various environmental conditions. This is Tryptophan dimethylallyltransferase ifgA from Penicillium roqueforti (strain FM164).